A 70-amino-acid chain; its full sequence is NADH dehydrogenase [ubiquinone] 1 alpha subcomplex subunit 1 (70 aa).

The chain crosses the membrane as a helical span at residues 1–21 (MWFEILPGLAIMGVCLVIPGV).

The protein belongs to the complex I NDUFA1 subunit family. Complex I is composed of 45 different subunits.

The protein localises to the mitochondrion inner membrane. Its function is as follows. Accessory subunit of the mitochondrial membrane respiratory chain NADH dehydrogenase (Complex I), that is believed not to be involved in catalysis. Complex I functions in the transfer of electrons from NADH to the respiratory chain. The immediate electron acceptor for the enzyme is believed to be ubiquinone. The chain is NADH dehydrogenase [ubiquinone] 1 alpha subcomplex subunit 1 (Ndufa1) from Mus musculus (Mouse).